A 43-amino-acid chain; its full sequence is Protein PsbN (43 aa).

A helical membrane pass occupies residues 7 to 27 (VTIFISGLLVSFTGYALYIAF).

It belongs to the PsbN family.

The protein resides in the plastid. The protein localises to the chloroplast thylakoid membrane. May play a role in photosystem I and II biogenesis. The chain is Protein PsbN from Dioscorea bulbifera (Air potato).